The sequence spans 745 residues: Copper-transporting ATPase (745 aa).

In terms of domain architecture, HMA spans 1–67 (MKESFYIEGM…LIEKLGYSPK (67 aa)). At 1–83 (MKESFYIEGM…KKEFFSPNVK (83 aa)) the chain is on the cytoplasmic side. Cu cation-binding residues include cysteine 12 and cysteine 15. The helical transmembrane segment at 84 to 104 (LALAVIFTLFVVYLSMGAMLS) threads the bilayer. Residues 105 to 124 (PSLLPKSLLAIDNHSNFLNA) are Extracellular-facing. Residues 125–144 (CLQLIGTLIVMHWGRDFYIQ) form a helical membrane-spanning segment. The Cytoplasmic portion of the chain corresponds to 145-151 (GFKALWH). The helical transmembrane segment at 152-172 (RQPNMSSLIAIGTSAALISSL) threads the bilayer. The Extracellular segment spans residues 173–194 (WQLYLVYTDHYTDQWSYGHYYF). A helical membrane pass occupies residues 195–215 (ESVCVILMFVMVGKRIENVSK). The Cytoplasmic segment spans residues 216-343 (DKALDAMQAL…KAEISRLADK (128 aa)). The chain crosses the membrane as a helical span at residues 344-366 (VSSVFVPSVIAIAILAFVVWLII). The Extracellular portion of the chain corresponds to 367–379 (APKPDFWWNFGIA). The chain crosses the membrane as a helical span at residues 380 to 397 (LEVFVSVLVISCPCALGL). Residues 398-685 (ATLMSILVAN…KLSQATIKNI (288 aa)) are Cytoplasmic-facing. Residue aspartate 435 is the 4-aspartylphosphate intermediate of the active site. Residues aspartate 631 and aspartate 635 each contribute to the Mg(2+) site. A helical membrane pass occupies residues 686–705 (KENLFWAFCYNSVFIPLACG). Over 706-716 (VLYKANIMLSP) the chain is Extracellular. A helical membrane pass occupies residues 717-735 (AIAGLAMSLSSVSVVLNSQ). The Cytoplasmic portion of the chain corresponds to 736-745 (RLRNFKIKDH).

The protein belongs to the cation transport ATPase (P-type) (TC 3.A.3) family. Type IB subfamily.

The protein resides in the cell membrane. The enzyme catalyses Cu(2+)(in) + ATP + H2O = Cu(2+)(out) + ADP + phosphate + H(+). In terms of biological role, probably involved in copper export. In Helicobacter pylori (Campylobacter pylori), this protein is Copper-transporting ATPase (copA).